The following is a 507-amino-acid chain: MLSRSGLRGARLRVVSLTSQRRLLNHFITHPPEPIPPPPPPAPSSSPSPKQFTLAVKDNIATTIPGLPTTCASGILSKSYVSPIEATIITQLRARGAVITGKTNLDEFGMGSHSIYSHYGPVSQDTPPETSAGGSSGGSAVAVANGEVELALGTDTGGSVRLPAAYTGIIGYKPSYGMISRYGVIPYANSLDTVGFLSKQINPLKELIIGERGLWKEHDSNDPTSLTTAARKRCAAQRRGYRSRQGQTTELEGLKFGIPLEYNIAELDPEIRDAWAAAAKRLQDAGARIVPVSLPTTKHALAAYYVIAPAEASSNLAKYDGVRYGARDAEGASDASAGGVLYASTRGKGFGEEVKRRILLGSYTLSSEAMDNYFIKAQRVRRLVRRDFNRVFALENPLQERETFELSDLPEEVEMEDKWGPEEVDFLLCPTAPTLAPKLKGVMEQQPVDAYMNDVFTVPASLAGLPAISVPMKVATEGAAGLQLIGQYWDDARLLDVADAVAKEVRT.

The interval 29–51 is disordered; that stretch reads THPPEPIPPPPPPAPSSSPSPKQ. The segment covering 31 to 46 has biased composition (pro residues); it reads PPEPIPPPPPPAPSSS. Catalysis depends on charge relay system residues Lys57 and Ser135. The active-site Acyl-ester intermediate is the Ser159.

This sequence belongs to the amidase family. GatA subfamily. Subunit of the heterotrimeric GatCAB amidotransferase (AdT) complex, composed of A, B and C subunits.

The protein localises to the mitochondrion. The catalysed reaction is L-glutamyl-tRNA(Gln) + L-glutamine + ATP + H2O = L-glutaminyl-tRNA(Gln) + L-glutamate + ADP + phosphate + H(+). In terms of biological role, allows the formation of correctly charged Gln-tRNA(Gln) through the transamidation of misacylated Glu-tRNA(Gln) in the mitochondria. The reaction takes place in the presence of glutamine and ATP through an activated gamma-phospho-Glu-tRNA(Gln). This is Glutamyl-tRNA(Gln) amidotransferase subunit A, mitochondrial from Podospora anserina (strain S / ATCC MYA-4624 / DSM 980 / FGSC 10383) (Pleurage anserina).